Reading from the N-terminus, the 136-residue chain is Biopolymer transport protein exbD2 (136 aa).

The Cytoplasmic portion of the chain corresponds to methionine 1 to valine 23. Residues methionine 24–valine 44 traverse the membrane as a helical segment. Over aspartate 45–glutamine 136 the chain is Periplasmic.

Belongs to the ExbD/TolR family. The accessory proteins ExbB and ExbD seem to form a complex with TonB.

The protein localises to the cell inner membrane. Functionally, involved in the TonB-dependent energy-dependent transport of various receptor-bound substrates. In Xanthomonas campestris pv. campestris (strain ATCC 33913 / DSM 3586 / NCPPB 528 / LMG 568 / P 25), this protein is Biopolymer transport protein exbD2 (exbD2).